Consider the following 305-residue polypeptide: uncharacterized protein (305 aa).

Positions 1 to 10 are enriched in basic residues; that stretch reads MLWAQRKKRK. Positions 1–30 are disordered; it reads MLWAQRKKRKATTETTEDKPAESHRPNDSW. The span at 16-27 shows a compositional bias: basic and acidic residues; it reads TEDKPAESHRPN. Serine 39 is modified (phosphoserine). Over residues 92 to 101 the composition is skewed to polar residues; it reads QKISGTSVSK. The segment at 92–114 is disordered; it reads QKISGTSVSKEMQRESGKSPSME. The residue at position 158 (serine 158) is a Phosphoserine. The span at 197–208 shows a compositional bias: low complexity; sequence SHHGNQSHQNHN. The tract at residues 197-305 is disordered; the sequence is SHHGNQSHQN…VNRRNQIYDS (109 aa). Polar residues-rich tracts occupy residues 209 to 221 and 231 to 244; these read TYPC…SRSV and LSHQ…SHQN. The span at 247–293 shows a compositional bias: low complexity; that stretch reads GHPSQQGHSSHSNQQGHLGLSSQQGHPSQSSHQSHQGQPGHPNHQSH. The segment covering 294-305 has biased composition (polar residues); the sequence is SLVNRRNQIYDS.

This is an uncharacterized protein from Rattus norvegicus (Rat).